A 419-amino-acid chain; its full sequence is Testin (419 aa).

The region spanning 92–199 is the PET domain; that stretch reads MILTNPVAAK…GDVKLPSEMN (108 aa). Disordered regions lie at residues 133–164 and 199–222; these read EKQP…PSKC and NAQG…GSKD. Residues 155-164 are compositionally biased toward basic and acidic residues; that stretch reads PAHDQDPSKC. LIM zinc-binding domains lie at 232–295, 297–357, and 360–419; these read YSCY…CDSE, PRCA…NHAV, and QGCH…KMMS.

Belongs to the prickle / espinas / testin family. In terms of assembly, interacts via LIM domain 1 with ZYX. Interacts (via LIM domain 3) with ENAH and VASP. Interacts with ALKBH4, talin, actin, alpha-actinin, GRIP1 and PXN. Interacts (via LIM domain 2) with ACTL7A (via N-terminus). Heterodimer with ACTL7A; the heterodimer interacts with ENAH to form a heterotrimer.

Its subcellular location is the cytoplasm. The protein localises to the cell junction. The protein resides in the focal adhesion. Its function is as follows. Scaffold protein that may play a role in cell adhesion, cell spreading and in the reorganization of the actin cytoskeleton. Plays a role in the regulation of cell proliferation. May act as a tumor suppressor. This Rattus norvegicus (Rat) protein is Testin (Tes).